The chain runs to 276 residues: Large ribosomal subunit protein uL2 (276 aa).

2 disordered regions span residues 37 to 59 (QFQK…GGHK) and 224 to 276 (VAMN…RHKR). Residues 50 to 59 (TTRHKGGGHK) are compositionally biased toward basic residues.

It belongs to the universal ribosomal protein uL2 family. As to quaternary structure, part of the 50S ribosomal subunit. Forms a bridge to the 30S subunit in the 70S ribosome.

Functionally, one of the primary rRNA binding proteins. Required for association of the 30S and 50S subunits to form the 70S ribosome, for tRNA binding and peptide bond formation. It has been suggested to have peptidyltransferase activity; this is somewhat controversial. Makes several contacts with the 16S rRNA in the 70S ribosome. This chain is Large ribosomal subunit protein uL2, found in Ralstonia nicotianae (strain ATCC BAA-1114 / GMI1000) (Ralstonia solanacearum).